Reading from the N-terminus, the 319-residue chain is Transaldolase (319 aa).

The active-site Schiff-base intermediate with substrate is lysine 126.

Belongs to the transaldolase family. Type 1 subfamily. Homodimer.

Its subcellular location is the cytoplasm. It catalyses the reaction D-sedoheptulose 7-phosphate + D-glyceraldehyde 3-phosphate = D-erythrose 4-phosphate + beta-D-fructose 6-phosphate. It functions in the pathway carbohydrate degradation; pentose phosphate pathway; D-glyceraldehyde 3-phosphate and beta-D-fructose 6-phosphate from D-ribose 5-phosphate and D-xylulose 5-phosphate (non-oxidative stage): step 2/3. Functionally, transaldolase is important for the balance of metabolites in the pentose-phosphate pathway. The chain is Transaldolase from Bordetella petrii (strain ATCC BAA-461 / DSM 12804 / CCUG 43448).